Consider the following 146-residue polypeptide: D-aminoacyl-tRNA deacylase (146 aa).

The Gly-cisPro motif, important for rejection of L-amino acids signature appears at 137–138 (GP).

Belongs to the DTD family. As to quaternary structure, homodimer.

The protein resides in the cytoplasm. It carries out the reaction glycyl-tRNA(Ala) + H2O = tRNA(Ala) + glycine + H(+). The catalysed reaction is a D-aminoacyl-tRNA + H2O = a tRNA + a D-alpha-amino acid + H(+). Functionally, an aminoacyl-tRNA editing enzyme that deacylates mischarged D-aminoacyl-tRNAs. Also deacylates mischarged glycyl-tRNA(Ala), protecting cells against glycine mischarging by AlaRS. Acts via tRNA-based rather than protein-based catalysis; rejects L-amino acids rather than detecting D-amino acids in the active site. By recycling D-aminoacyl-tRNA to D-amino acids and free tRNA molecules, this enzyme counteracts the toxicity associated with the formation of D-aminoacyl-tRNA entities in vivo and helps enforce protein L-homochirality. In Anoxybacillus flavithermus (strain DSM 21510 / WK1), this protein is D-aminoacyl-tRNA deacylase.